A 452-amino-acid chain; its full sequence is tRNA modification GTPase MnmE (452 aa).

(6S)-5-formyl-5,6,7,8-tetrahydrofolate is bound by residues Arg25, Glu82, and Arg125. The region spanning 221–374 (GLHVVLAGKP…LRARLLALAG (154 aa)) is the TrmE-type G domain. Residue Asn231 participates in K(+) binding. Residues 231-236 (NVGKSS), 250-256 (TPIAGTT), 275-278 (DTAG), and 355-357 (SAR) each bind GTP. Ser235 is a binding site for Mg(2+). Residues Thr250, Ile252, and Thr255 each coordinate K(+). Thr256 is a binding site for Mg(2+). Lys452 contacts (6S)-5-formyl-5,6,7,8-tetrahydrofolate.

Belongs to the TRAFAC class TrmE-Era-EngA-EngB-Septin-like GTPase superfamily. TrmE GTPase family. As to quaternary structure, homodimer. Heterotetramer of two MnmE and two MnmG subunits. The cofactor is K(+).

The protein resides in the cytoplasm. Functionally, exhibits a very high intrinsic GTPase hydrolysis rate. Involved in the addition of a carboxymethylaminomethyl (cmnm) group at the wobble position (U34) of certain tRNAs, forming tRNA-cmnm(5)s(2)U34. The polypeptide is tRNA modification GTPase MnmE (Bordetella petrii (strain ATCC BAA-461 / DSM 12804 / CCUG 43448)).